The primary structure comprises 347 residues: Ribosomal RNA large subunit methyltransferase M (347 aa).

S-adenosyl-L-methionine is bound by residues Ser-184, 217-220 (APGG), Asp-236, Asp-256, and Asp-272. Lys-301 (proton acceptor) is an active-site residue.

It belongs to the class I-like SAM-binding methyltransferase superfamily. RNA methyltransferase RlmE family. RlmM subfamily. In terms of assembly, monomer.

Its subcellular location is the cytoplasm. It carries out the reaction cytidine(2498) in 23S rRNA + S-adenosyl-L-methionine = 2'-O-methylcytidine(2498) in 23S rRNA + S-adenosyl-L-homocysteine + H(+). Functionally, catalyzes the 2'-O-methylation at nucleotide C2498 in 23S rRNA. The polypeptide is Ribosomal RNA large subunit methyltransferase M (Xanthomonas axonopodis pv. citri (strain 306)).